Reading from the N-terminus, the 70-residue chain is Putative ankyrin repeat protein RC0502 (70 aa).

The ANK repeat unit spans residues 9 to 43; that stretch reads KGRIPIHYATYSKQHEITQILILLQPGSEIDTVDN.

This chain is Putative ankyrin repeat protein RC0502, found in Rickettsia conorii (strain ATCC VR-613 / Malish 7).